We begin with the raw amino-acid sequence, 82 residues long: Small ribosomal subunit protein bS16 (82 aa).

This sequence belongs to the bacterial ribosomal protein bS16 family.

The chain is Small ribosomal subunit protein bS16 from Dehalococcoides mccartyi (strain ATCC BAA-2266 / KCTC 15142 / 195) (Dehalococcoides ethenogenes (strain 195)).